A 293-amino-acid chain; its full sequence is Mycothiol S-conjugate amidase (293 aa).

Residues His-13, Asp-16, and His-144 each contribute to the Zn(2+) site.

Belongs to the MshB deacetylase family. Mca subfamily. In terms of assembly, monomer. Requires Zn(2+) as cofactor.

The enzyme catalyses mycothiol S-conjugate + H2O = an N-acetyl-L-cysteine-S-conjugate + 1D-myo-inositol 2-amino-2-deoxy-alpha-D-glucopyranoside. Its function is as follows. A mycothiol (MSH, N-acetylcysteinyl-glucosaminyl-inositol) S-conjugate amidase, it recycles conjugated MSH to the N-acetyl cysteine conjugate (AcCys S-conjugate, a mercapturic acid) and the MSH precursor. Involved in MSH-dependent detoxification of a number of alkylating agents and antibiotics. This is Mycothiol S-conjugate amidase from Streptomyces coelicolor (strain ATCC BAA-471 / A3(2) / M145).